We begin with the raw amino-acid sequence, 360 residues long: Lactosylceramide 4-alpha-galactosyltransferase (360 aa).

The Cytoplasmic portion of the chain corresponds to methionine 1–arginine 30. The helical; Signal-anchor for type II membrane protein transmembrane segment at valine 31 to tryptophan 51 threads the bilayer. The Lumenal portion of the chain corresponds to histidine 52 to leucine 360. Residues aspartate 199–aspartate 201 carry the DXD motif motif. Asparagine 210 and asparagine 316 each carry an N-linked (GlcNAc...) asparagine glycan.

This sequence belongs to the glycosyltransferase 32 family. Ubiquitous. Highly expressed in kidney, mesenteric lymph node, spleen and brain.

The protein localises to the golgi apparatus membrane. The catalysed reaction is a beta-D-Gal-(1-&gt;4)-beta-D-Glc-(1&lt;-&gt;1)-Cer(d18:1(4E)) + UDP-alpha-D-galactose = a globoside Gb3Cer (d18:1(4E)) + UDP + H(+). The enzyme catalyses a beta-D-Gal-(1&lt;-&gt;1')-ceramide + UDP-alpha-D-galactose = alpha-D-Gal-(1-&gt;4)-beta-D-Gal-(1&lt;-&gt;1')-Cer + UDP + H(+). Its pathway is glycolipid biosynthesis. Functionally, catalyzes the transfer of galactose from UDP-alpha-D-galactose to lactosylceramide/beta-D-galactosyl-(1-&gt;4)-beta-D-glucosyl-(1&lt;-&gt;1)-ceramide(d18:1(4E)) to produce globotriaosylceramide/globoside Gb3Cer (d18:1(4E)). Also able to transfer galactose to galactosylceramide/beta-D-Gal-(1&lt;-&gt;1')-Cer. Globoside Gb3Cer is a glycosphingolipid of the globo serie, one of the major types of neutral root structures of glycosphingolipids, that constitute a significant portion of mammalian cell membranes. This chain is Lactosylceramide 4-alpha-galactosyltransferase, found in Rattus norvegicus (Rat).